The chain runs to 334 residues: Protein-glutamate methylesterase/protein-glutamine glutaminase 2 (334 aa).

The region spanning Asn-2–Leu-120 is the Response regulatory domain. Asp-53 is subject to 4-aspartylphosphate. The 201-residue stretch at Pro-134–Ile-334 folds into the CheB-type methylesterase domain. Active-site residues include Ser-157, His-184, and Asp-277.

Belongs to the CheB family. Post-translationally, phosphorylated by CheA. Phosphorylation of the N-terminal regulatory domain activates the methylesterase activity.

It is found in the cytoplasm. The catalysed reaction is [protein]-L-glutamate 5-O-methyl ester + H2O = L-glutamyl-[protein] + methanol + H(+). It carries out the reaction L-glutaminyl-[protein] + H2O = L-glutamyl-[protein] + NH4(+). In terms of biological role, involved in chemotaxis. Part of a chemotaxis signal transduction system that modulates chemotaxis in response to various stimuli. Catalyzes the demethylation of specific methylglutamate residues introduced into the chemoreceptors (methyl-accepting chemotaxis proteins or MCP) by CheR. Also mediates the irreversible deamidation of specific glutamine residues to glutamic acid. The chain is Protein-glutamate methylesterase/protein-glutamine glutaminase 2 from Burkholderia orbicola (strain AU 1054).